The following is a 42-amino-acid chain: Delta-actitoxin-Ael2d (42 aa).

3 disulfide bridges follow: cysteine 4/cysteine 37, cysteine 6/cysteine 30, and cysteine 20/cysteine 38.

It belongs to the sea anemone type 3 (BDS) potassium channel toxin family.

The protein localises to the secreted. It is found in the nematocyst. Functionally, binds to voltage-gated sodium channels (Nav), and slows down the inactivation of mammalian Nav1.2/SCN2A, Nav1.3/SCN3A Nav1.4/SCN4A, Nav1.6/SCN8A, insect DmNav1 and BgNav1 channels, and arachnid VdNav1 channel. This toxin acts by binding to site 3 of sodium channels. The protein is Delta-actitoxin-Ael2d of Anthopleura elegantissima (Green aggregating anemone).